Here is a 630-residue protein sequence, read N- to C-terminus: Transposase B from transposon PsiTn554 (630 aa).

A Core-binding (CB) domain is found at 216–302 (TYFKQLVKRY…ILEGLFSTLH (87 aa)). Residues 326–513 (AKPRFIDEFV…FDETLKNEFT (188 aa)) enclose the Tyr recombinase domain. Active-site residues include R363, K391, H465, R468, and H491. Y500 functions as the O-(3'-phospho-DNA)-tyrosine intermediate in the catalytic mechanism.

It belongs to the 'phage' integrase family.

The polypeptide is Transposase B from transposon PsiTn554 (tnpB) (Staphylococcus aureus).